A 226-amino-acid chain; its full sequence is dTTP/UTP pyrophosphatase (226 aa).

Residue Asp-85 is the Proton acceptor of the active site.

The protein belongs to the Maf family. YhdE subfamily. A divalent metal cation serves as cofactor.

The protein resides in the cytoplasm. The catalysed reaction is dTTP + H2O = dTMP + diphosphate + H(+). It catalyses the reaction UTP + H2O = UMP + diphosphate + H(+). Nucleoside triphosphate pyrophosphatase that hydrolyzes dTTP and UTP. May have a dual role in cell division arrest and in preventing the incorporation of modified nucleotides into cellular nucleic acids. This Psychrobacter cryohalolentis (strain ATCC BAA-1226 / DSM 17306 / VKM B-2378 / K5) protein is dTTP/UTP pyrophosphatase.